The following is an 82-amino-acid chain: Putative membrane protein insertion efficiency factor (82 aa).

The protein belongs to the UPF0161 family.

The protein localises to the cell inner membrane. Functionally, could be involved in insertion of integral membrane proteins into the membrane. The polypeptide is Putative membrane protein insertion efficiency factor (Francisella tularensis subsp. holarctica (strain LVS)).